Reading from the N-terminus, the 512-residue chain is ATP synthase subunit alpha, chloroplastic (512 aa).

170–177 (GDRQTGKT) serves as a coordination point for ATP.

This sequence belongs to the ATPase alpha/beta chains family. In terms of assembly, F-type ATPases have 2 components, CF(1) - the catalytic core - and CF(0) - the membrane proton channel. CF(1) has five subunits: alpha(3), beta(3), gamma(1), delta(1), epsilon(1). CF(0) has four main subunits: a, b, b' and c.

Its subcellular location is the plastid. The protein resides in the chloroplast thylakoid membrane. It catalyses the reaction ATP + H2O + 4 H(+)(in) = ADP + phosphate + 5 H(+)(out). Its function is as follows. Produces ATP from ADP in the presence of a proton gradient across the membrane. The alpha chain is a regulatory subunit. The polypeptide is ATP synthase subunit alpha, chloroplastic (Staurastrum punctulatum (Green alga)).